The chain runs to 576 residues: Dihydroxy-acid dehydratase (576 aa).

Cys-56 contributes to the [2Fe-2S] cluster binding site. Residue Asp-88 coordinates Mg(2+). A [2Fe-2S] cluster-binding site is contributed by Cys-129. Residues Asp-130 and Lys-131 each contribute to the Mg(2+) site. Lys-131 is modified (N6-carboxylysine). Cys-201 contacts [2Fe-2S] cluster. Glu-453 contacts Mg(2+). The active-site Proton acceptor is Ser-479.

Belongs to the IlvD/Edd family. Homodimer. Requires [2Fe-2S] cluster as cofactor. The cofactor is Mg(2+).

It catalyses the reaction (2R)-2,3-dihydroxy-3-methylbutanoate = 3-methyl-2-oxobutanoate + H2O. It carries out the reaction (2R,3R)-2,3-dihydroxy-3-methylpentanoate = (S)-3-methyl-2-oxopentanoate + H2O. It functions in the pathway amino-acid biosynthesis; L-isoleucine biosynthesis; L-isoleucine from 2-oxobutanoate: step 3/4. It participates in amino-acid biosynthesis; L-valine biosynthesis; L-valine from pyruvate: step 3/4. Functionally, functions in the biosynthesis of branched-chain amino acids. Catalyzes the dehydration of (2R,3R)-2,3-dihydroxy-3-methylpentanoate (2,3-dihydroxy-3-methylvalerate) into 2-oxo-3-methylpentanoate (2-oxo-3-methylvalerate) and of (2R)-2,3-dihydroxy-3-methylbutanoate (2,3-dihydroxyisovalerate) into 2-oxo-3-methylbutanoate (2-oxoisovalerate), the penultimate precursor to L-isoleucine and L-valine, respectively. The sequence is that of Dihydroxy-acid dehydratase from Parvibaculum lavamentivorans (strain DS-1 / DSM 13023 / NCIMB 13966).